The primary structure comprises 203 residues: Inositol diphosphatase DSP3 (203 aa).

One can recognise a Tyrosine-protein phosphatase domain in the interval 20–169 (NFSMVEDGIY…FDIVSLRQCL (150 aa)). The WPD loop important for active site topology stretch occupies residues 76–88 (FGIEGKTDPPTPM). Cysteine 112 (phosphocysteine intermediate) is an active-site residue.

This sequence belongs to the protein-tyrosine phosphatase family. Atypical dual-specificity phosphatase Siw14-like subfamily. Interacts with FLZ1. In terms of tissue distribution, highly expressed in roots, stems and flowers. Expressed at low levels in leaves and siliques.

It is found in the nucleus. It carries out the reaction 5-diphospho-1D-myo-inositol 1,2,3,4,6-pentakisphosphate + H2O = 1D-myo-inositol hexakisphosphate + phosphate + H(+). The catalysed reaction is 1,5-bis(diphospho)-1D-myo-inositol 2,3,4,6-tetrakisphosphate + H2O = 1-diphospho-1D-myo-inositol 2,3,4,5,6-pentakisphosphate + phosphate + 2 H(+). It catalyses the reaction 3,5-bis(diphospho)-1D-myo-inositol 1,2,4,6-tetrakisphosphate + H2O = 3-diphospho-1D-myo-inositol 1,2,4,5,6-pentakisphosphate + phosphate + 2 H(+). The enzyme catalyses 6-diphospho-1D-myo-inositol pentakisphosphate + H2O = 1D-myo-inositol hexakisphosphate + phosphate + H(+). Cleaves the beta-phosphate at the 5-position of soluble inositol pyrophosphates. Has highest activity on 5-diphosphoinositol 1,2,3,4,6-pentakisphosphate (5-InsP(7)), 1,5-bis-diphosphoinositol 2,3,4,6-tetrakisphosphate (1,5-InsP(8)) and 3,5-InsP(8). Possesses phosphotyrosine phosphatase activity in vitro. Dephosphorylates the phosphoinositides PI(3,5)P2. Hydrolyzes para-nitrophenyl phosphate and O-methylfluorescein phosphate in vitro. This is Inositol diphosphatase DSP3 from Arabidopsis thaliana (Mouse-ear cress).